The chain runs to 172 residues: NADH-quinone oxidoreductase subunit B (172 aa).

Residues C42, C43, C107, and C136 each coordinate [4Fe-4S] cluster.

It belongs to the complex I 20 kDa subunit family. In terms of assembly, NDH-1 is composed of 14 different subunits. Subunits NuoB, C, D, E, F, and G constitute the peripheral sector of the complex. [4Fe-4S] cluster is required as a cofactor.

The protein localises to the cell inner membrane. The catalysed reaction is a quinone + NADH + 5 H(+)(in) = a quinol + NAD(+) + 4 H(+)(out). NDH-1 shuttles electrons from NADH, via FMN and iron-sulfur (Fe-S) centers, to quinones in the respiratory chain. The immediate electron acceptor for the enzyme in this species is believed to be ubiquinone. Couples the redox reaction to proton translocation (for every two electrons transferred, four hydrogen ions are translocated across the cytoplasmic membrane), and thus conserves the redox energy in a proton gradient. The chain is NADH-quinone oxidoreductase subunit B from Sulfurovum sp. (strain NBC37-1).